The primary structure comprises 291 residues: MVREQYTTTTEGTHIQRPENQCVYKIGIYGWRKRCLYLFVLLLLIILLVNFALTIWILKVMWFSPTGMGHLRVTKDGLRLEGESEFLFPLYAKEIHSRVDSSLLLQSTQNVTVNARNSEGEVTGRLKVGPKMVEVQSQQFQINSKDGKPLFTVDEKEVVVGTDKLRVTGPEGALFEHSVETPLVRADPFQDLRLESPTRSLSMDAPKGVHIKAHAGKIEALSQMDIIFQSSDGMLVLDAETVCLPKLVQGTQGPAGSSQRLYEICVCPDGKLYLSVAGVGTTCHEHSHICL.

The chain crosses the membrane as a helical; Signal-anchor for type II membrane protein span at residues 38–58 (LFVLLLLIILLVNFALTIWIL). Over 59-291 (KVMWFSPTGM…TCHEHSHICL (233 aa)) the chain is Extracellular. N-linked (GlcNAc...) asparagine glycosylation is present at Asn-110. 2 disulfides stabilise this stretch: Cys-265/Cys-290 and Cys-267/Cys-283.

This sequence belongs to the sarcoglycan beta/delta/gamma/zeta family. In terms of assembly, interacts with the syntrophin SNTA1. Cross-link to form 2 major subcomplexes: one consisting of SGCB, SGCD and SGCG and the other consisting of SGCB and SGCD. The association between SGCB and SGCG is particularly strong while SGCA is loosely associated with the other sarcoglycans. Interacts with FLNC. Post-translationally, disulfide bonds are present.

The protein localises to the cell membrane. It localises to the sarcolemma. It is found in the cytoplasm. Its subcellular location is the cytoskeleton. Component of the sarcoglycan complex, a subcomplex of the dystrophin-glycoprotein complex which forms a link between the F-actin cytoskeleton and the extracellular matrix. The sequence is that of Gamma-sarcoglycan (SGCG) from Canis lupus familiaris (Dog).